The sequence spans 100 residues: Thioredoxin (100 aa).

A Thioredoxin domain is found at 1 to 100 (MKHITNKAEL…PKNELKELLK (100 aa)). Cysteines 29 and 32 form a disulfide.

The protein belongs to the thioredoxin family.

Participates in various redox reactions through the reversible oxidation of its active center dithiol to a disulfide and catalyzes dithiol-disulfide exchange reactions. This is Thioredoxin (trxA) from Mycoplasmoides gallisepticum (strain R(low / passage 15 / clone 2)) (Mycoplasma gallisepticum).